Reading from the N-terminus, the 340-residue chain is Agmatinase, mitochondrial (340 aa).

Mn(2+)-binding residues include histidine 150, aspartate 173, histidine 175, aspartate 177, aspartate 264, and aspartate 266.

This sequence belongs to the arginase family. Agmatinase subfamily. The cofactor is Mn(2+).

It is found in the mitochondrion. It carries out the reaction agmatine + H2O = urea + putrescine. The protein operates within amine and polyamine biosynthesis; putrescine biosynthesis via agmatine pathway; putrescine from agmatine: step 1/1. In Gallus gallus (Chicken), this protein is Agmatinase, mitochondrial (AGMAT).